We begin with the raw amino-acid sequence, 249 residues long: Cilia- and flagella-associated protein 410 (249 aa).

LRR repeat units lie at residues 19 to 40, 41 to 62, and 63 to 84; these read NVRK…REMP, SLEV…RSCR, and RLSE…FYLK. The LRRCT domain maps to 97–137; the sequence is NPCCGTSPHLYRMTVLRNLPHLQKLDNQAVTEEELTRALME. A disordered region spans residues 146–203; that stretch reads HREGAGNGCPKPPYALNSVSSATETSQHLLSYTEETEVQGQTTTDQSPSFSPRDTMRS. Over residues 162 to 175 the composition is skewed to polar residues; it reads NSVSSATETSQHLL.

As to quaternary structure, found in a complex with CFAP410, NEK1 and SPATA7. Interacts with NEK1. Expressed in the retina.

The protein resides in the cell projection. The protein localises to the cilium. It is found in the cytoplasm. Its subcellular location is the cytoskeleton. It localises to the cilium basal body. The protein resides in the mitochondrion. The protein localises to the photoreceptor outer segment. Functionally, plays a role in cilia formation and/or maintenance. Plays a role in the regulation of cell morphology and cytoskeletal organization. Involved in DNA damage repair. The chain is Cilia- and flagella-associated protein 410 from Mus musculus (Mouse).